The primary structure comprises 324 residues: Phospho-N-acetylmuramoyl-pentapeptide-transferase (324 aa).

10 helical membrane-spanning segments follow: residues 9–29 (TFAVAFIITVIGVPLFIPFLV), 53–73 (TMGAVVFITAMLISFLVFSFI), 77–97 (VSAATWLLFIALALFGALGFL), 117–137 (FLGQVVISILFYLVYHFNDFA), 147–167 (IEVDLGWFFVIFILFWLVGFS), 176–196 (LDGLVSGLSVIAFSAFGVIAF), 201–221 (MDVAIFCFAIVGGMLGFLLFN), 227–247 (IFMGDTGSLALGGSIAAISIL), 253–273 (LLLLIGIIFVIETASVILQVF), and 304–324 (VLTFWGIGLVGAIISVCVVIF).

It belongs to the glycosyltransferase 4 family. MraY subfamily. Mg(2+) is required as a cofactor.

It localises to the cell membrane. It carries out the reaction UDP-N-acetyl-alpha-D-muramoyl-L-alanyl-gamma-D-glutamyl-meso-2,6-diaminopimeloyl-D-alanyl-D-alanine + di-trans,octa-cis-undecaprenyl phosphate = di-trans,octa-cis-undecaprenyl diphospho-N-acetyl-alpha-D-muramoyl-L-alanyl-D-glutamyl-meso-2,6-diaminopimeloyl-D-alanyl-D-alanine + UMP. It participates in cell wall biogenesis; peptidoglycan biosynthesis. Functionally, catalyzes the initial step of the lipid cycle reactions in the biosynthesis of the cell wall peptidoglycan: transfers peptidoglycan precursor phospho-MurNAc-pentapeptide from UDP-MurNAc-pentapeptide onto the lipid carrier undecaprenyl phosphate, yielding undecaprenyl-pyrophosphoryl-MurNAc-pentapeptide, known as lipid I. This is Phospho-N-acetylmuramoyl-pentapeptide-transferase from Listeria monocytogenes serovar 1/2a (strain ATCC BAA-679 / EGD-e).